We begin with the raw amino-acid sequence, 380 residues long: Anthranilate phosphoribosyltransferase (380 aa).

Gly109, Asn119, Ser121, Thr122, Lys142, Ser144, and Ser146 together coordinate 5-phospho-alpha-D-ribose 1-diphosphate. Asp258 and Glu259 together coordinate Mg(2+).

It belongs to the anthranilate phosphoribosyltransferase family. Homodimer. It depends on Mg(2+) as a cofactor.

The enzyme catalyses N-(5-phospho-beta-D-ribosyl)anthranilate + diphosphate = 5-phospho-alpha-D-ribose 1-diphosphate + anthranilate. It functions in the pathway amino-acid biosynthesis; L-tryptophan biosynthesis; L-tryptophan from chorismate: step 2/5. In terms of biological role, catalyzes the transfer of the phosphoribosyl group of 5-phosphorylribose-1-pyrophosphate (PRPP) to anthranilate to yield N-(5'-phosphoribosyl)-anthranilate (PRA), the second step in tryptophan biosynthesis. The chain is Anthranilate phosphoribosyltransferase from Saccharomyces cerevisiae (strain ATCC 204508 / S288c) (Baker's yeast).